The primary structure comprises 165 residues: (2E)-enoyl-[ACP] glycyltransferase (165 aa).

Belongs to the FcoT family.

It catalyses the reaction a (3R)-3-[(carboxymethyl)amino]fatty acid + holo-[ACP] + H(+) = a (2E)-enoyl-[ACP] + glycine + H2O. The catalysed reaction is (3R)-3-[(carboxymethyl)amino]butanoate + holo-[ACP] + H(+) = (2E)-butenoyl-[ACP] + glycine + H2O. In terms of biological role, involved in the biosynthesis of a unique class of isonitrile lipopeptides (INLPs). Catalyzes a Michael addition of glycine to the beta-position of an alpha,beta-unsaturated fatty acyl-[ACP], producing a (3R)-3-[(carboxymethyl)amino]fatty acid. Acts on the (2E)-butenoyl moiety loaded on the acyl-carrier protein ScoB, forming the product (3R)-3-[(carboxymethyl)amino]butanoate released from ScoB. The sequence is that of (2E)-enoyl-[ACP] glycyltransferase from Streptomyces coeruleorubidus.